The primary structure comprises 184 residues: ATP-dependent protease subunit HslV (184 aa).

Threonine 11 is an active-site residue. Na(+)-binding residues include alanine 165, cysteine 168, and threonine 171.

This sequence belongs to the peptidase T1B family. HslV subfamily. As to quaternary structure, a double ring-shaped homohexamer of HslV is capped on each side by a ring-shaped HslU homohexamer. The assembly of the HslU/HslV complex is dependent on binding of ATP.

The protein resides in the cytoplasm. It catalyses the reaction ATP-dependent cleavage of peptide bonds with broad specificity.. Allosterically activated by HslU binding. In terms of biological role, protease subunit of a proteasome-like degradation complex believed to be a general protein degrading machinery. This Zymomonas mobilis subsp. mobilis (strain ATCC 31821 / ZM4 / CP4) protein is ATP-dependent protease subunit HslV.